The primary structure comprises 97 residues: Coiled-coil domain-containing protein 167 (97 aa).

Positions 10 to 79 form a coiled coil; that stretch reads GVALEIDGLE…LRQENRKNML (70 aa). A helical membrane pass occupies residues 77-97; the sequence is NMLLSVAIFLLLTVIYAYWAL.

It is found in the membrane. The chain is Coiled-coil domain-containing protein 167 (CCDC167) from Bos taurus (Bovine).